Here is a 432-residue protein sequence, read N- to C-terminus: Tyrosine-protein phosphatase non-receptor type 1 (432 aa).

M1 carries the N-acetylmethionine modification. The Tyrosine-protein phosphatase domain occupies 3-277 (MEKEFEEIDK…RFSYLAVIEG (275 aa)). Y20 is modified (phosphotyrosine). A Phosphoserine; by CLK1, CLK2 and PKB/AKT1 or PKB/AKT2 modification is found at S50. Y66 bears the Phosphotyrosine; by EGFR mark. Residues D181 and 215–221 (CSAGIGR) each bind substrate. The active-site Phosphocysteine intermediate is the C215. Position 215 is a cysteine persulfide (C215). At C215 the chain carries S-nitrosocysteine; in reversibly inhibited form. 2 positions are modified to phosphoserine; by CLK1 and CLK2: S242 and S243. Q262 contacts substrate. Disordered regions lie at residues 297 to 322 (EDLDLPPEHVPPPPRPPKRTLEPHNG) and 335 to 399 (SEET…EEHK). A phosphoserine mark is found at S335, S362, and S364. Over residues 354–364 (SSAMHSVSSMS) the composition is skewed to low complexity. T367 carries the phosphothreonine modification.

It belongs to the protein-tyrosine phosphatase family. Non-receptor class 1 subfamily. In terms of assembly, interacts with EPHA3 (phosphorylated); dephosphorylates EPHA3 and may regulate its trafficking and function. Interacts with MET. Interacts with NCK1. Post-translationally, ser-50 is the major site of phosphorylation as compared to Ser-242 and Ser-243. Activated by phosphorylation at Ser-50. S-nitrosylation of Cys-215 inactivates the enzyme activity. In terms of processing, sulfhydration at Cys-215 following endoplasmic reticulum stress inactivates the enzyme activity, promoting EIF2AK3/PERK activity. In terms of tissue distribution, most abundant in testis. Also found in kidney, spleen, muscle, liver, heart and brain.

The protein localises to the endoplasmic reticulum membrane. It catalyses the reaction O-phospho-L-tyrosyl-[protein] + H2O = L-tyrosyl-[protein] + phosphate. In terms of biological role, tyrosine-protein phosphatase which acts as a regulator of endoplasmic reticulum unfolded protein response. Mediates dephosphorylation of EIF2AK3/PERK; inactivating the protein kinase activity of EIF2AK3/PERK. May play an important role in CKII- and p60c-src-induced signal transduction cascades. May regulate the EFNA5-EPHA3 signaling pathway which modulates cell reorganization and cell-cell repulsion. May also regulate the hepatocyte growth factor receptor signaling pathway through dephosphorylation of MET. The polypeptide is Tyrosine-protein phosphatase non-receptor type 1 (Ptpn1) (Mus musculus (Mouse)).